The following is a 622-amino-acid chain: tRNA uridine 5-carboxymethylaminomethyl modification enzyme MnmG (622 aa).

10–15 (GGGHAG) contributes to the FAD binding site. NAD(+) is bound at residue 269-283 (GPRYCPSVEDKIVKF).

This sequence belongs to the MnmG family. Homodimer. Heterotetramer of two MnmE and two MnmG subunits. The cofactor is FAD.

The protein resides in the cytoplasm. NAD-binding protein involved in the addition of a carboxymethylaminomethyl (cmnm) group at the wobble position (U34) of certain tRNAs, forming tRNA-cmnm(5)s(2)U34. The sequence is that of tRNA uridine 5-carboxymethylaminomethyl modification enzyme MnmG from Bartonella quintana (strain Toulouse) (Rochalimaea quintana).